Here is a 232-residue protein sequence, read N- to C-terminus: Endonuclease V (232 aa).

Mg(2+)-binding residues include D43 and D109.

The protein belongs to the endonuclease V family. Mg(2+) is required as a cofactor.

It is found in the cytoplasm. It catalyses the reaction Endonucleolytic cleavage at apurinic or apyrimidinic sites to products with a 5'-phosphate.. Its function is as follows. DNA repair enzyme involved in the repair of deaminated bases. Selectively cleaves double-stranded DNA at the second phosphodiester bond 3' to a deoxyinosine leaving behind the intact lesion on the nicked DNA. This chain is Endonuclease V, found in Thermofilum pendens (strain DSM 2475 / Hrk 5).